A 344-amino-acid polypeptide reads, in one-letter code: Cyclin-D1-binding protein 1 homolog (344 aa).

Positions 191 to 215 (SQDPFGDVLDDDDDDEGGRGNQDRY) are disordered.

It belongs to the CCNDBP1 family.

It localises to the cytoplasm. Its subcellular location is the nucleus. In terms of biological role, may negatively regulate cell cycle progression. In Danio rerio (Zebrafish), this protein is Cyclin-D1-binding protein 1 homolog (ccndbp1).